The primary structure comprises 636 residues: 3-phosphoinositide-dependent protein kinase 1 (636 aa).

2 stretches are compositionally biased toward low complexity: residues 1 to 20 and 27 to 37; these read MEDL…NNDT and APTTLNLTPTA. Positions 1–45 are disordered; sequence MEDLTPTNTSLDTTTTNNDTTSDREAAPTTLNLTPTASESENSLS. In terms of domain architecture, Protein kinase spans 69-364; the sequence is FMFLQSMGEG…SQELMAHKFF (296 aa). ATP-binding positions include 79 to 81 and Lys-98; that span reads AYS. The PIF-pocket stretch occupies residues 100–149; that stretch reads LQKSYLNRHQKMDAIIREKNILTYLSQECGGHPFVTQLYTHFHDQARIYF. Residues 152-154 and Asp-158 each bind ATP; that span reads GLV. The active-site Proton acceptor is Asp-197. ATP-binding residues include Asp-201 and Asp-215. Disordered regions lie at residues 233–264 and 593–636; these read TDAN…EENT and KKSR…KKSP. Residues 550–631 adopt a coiled-coil conformation; the sequence is DLEKKADEWC…QVSKKLSMQM (82 aa). The span at 597 to 624 shows a compositional bias: basic and acidic residues; the sequence is KEMMREQKALRRKQEKEEKKALKAEQVS.

This sequence belongs to the protein kinase superfamily. AGC Ser/Thr protein kinase family. PDPK1 subfamily. Interacts directly with sgk-1, akt-1 and akt-2.

The protein resides in the cytoplasm. It carries out the reaction L-seryl-[protein] + ATP = O-phospho-L-seryl-[protein] + ADP + H(+). The enzyme catalyses L-threonyl-[protein] + ATP = O-phospho-L-threonyl-[protein] + ADP + H(+). Functionally, involved in the daf-2/insulin receptor-like transduction pathway, which controls longevity and prevents developmental arrest at the dauer stage. Phosphorylates and activates sgk-1, akt-1 and akt-2. The polypeptide is 3-phosphoinositide-dependent protein kinase 1 (Caenorhabditis elegans).